The chain runs to 523 residues: 2-isopropylmalate synthase (523 aa).

Residues 5-267 enclose the Pyruvate carboxyltransferase domain; sequence VIIFDTTLRD…HTNINHHEIW (263 aa). Mn(2+) is bound by residues Asp14, His202, His204, and Asn238. Positions 392–523 are regulatory domain; that stretch reads RLDYFSVQSG…QNKENNKETV (132 aa).

This sequence belongs to the alpha-IPM synthase/homocitrate synthase family. LeuA type 1 subfamily. In terms of assembly, homodimer. Mn(2+) is required as a cofactor.

It localises to the cytoplasm. It catalyses the reaction 3-methyl-2-oxobutanoate + acetyl-CoA + H2O = (2S)-2-isopropylmalate + CoA + H(+). The protein operates within amino-acid biosynthesis; L-leucine biosynthesis; L-leucine from 3-methyl-2-oxobutanoate: step 1/4. Catalyzes the condensation of the acetyl group of acetyl-CoA with 3-methyl-2-oxobutanoate (2-ketoisovalerate) to form 3-carboxy-3-hydroxy-4-methylpentanoate (2-isopropylmalate). This Klebsiella pneumoniae (strain 342) protein is 2-isopropylmalate synthase.